We begin with the raw amino-acid sequence, 375 residues long: Actin, cytoplasmic (375 aa).

Belongs to the actin family.

It is found in the cytoplasm. It localises to the cytoskeleton. The catalysed reaction is ATP + H2O = ADP + phosphate + H(+). In terms of biological role, actins are highly conserved proteins that are involved in various types of cell motility and are ubiquitously expressed in all eukaryotic cells. This chain is Actin, cytoplasmic, found in Oxytricha trifallax (Sterkiella histriomuscorum).